The following is a 227-amino-acid chain: MFKRMAEFGPDSGGRVKGVTIVKPIVYGNVARYFGKKREEDGHTHQWTVYVKPYRNEDMSAYVKKIQFKLHESYGNPLRVVTKPPYEITETGWGEFEIIIKIFFIDPNERPVTLYHLLKLFQSDTNAMLGKKTVVSEFYDEMIFQDPTAMMQQLLTTSRQLTLGAYKHETEFAELEVKTREKLEAAKKKTSFEIAELKERLKASRETINCLKNEIRKLEEDDQTKDI.

The region spanning 15–158 is the YEATS domain; it reads RVKGVTIVKP…AMMQQLLTTS (144 aa). Lys37 participates in a covalent cross-link: Glycyl lysine isopeptide (Lys-Gly) (interchain with G-Cter in SUMO2). The segment at 93 to 97 is diacetylated histone H3 binding; that stretch reads WGEFE. The segment at 163-227 is interaction with MLLT10; the sequence is LGAYKHETEF…LEEDDQTKDI (65 aa). The segment at 168-227 is interaction with TACC1; that stretch reads HETEFAELEVKTREKLEAAKKKTSFEIAELKERLKASRETINCLKNEIRKLEEDDQTKDI. Positions 178 to 226 form a coiled coil; the sequence is KTREKLEAAKKKTSFEIAELKERLKASRETINCLKNEIRKLEEDDQTKD.

In terms of assembly, component of numerous complexes with chromatin remodeling and histone acetyltransferase activity. Component of the NuA4 histone acetyltransferase complex which contains the catalytic subunit KAT5/TIP60 and the subunits EP400, TRRAP/PAF400, BRD8/SMAP, EPC1, DMAP1/DNMAP1, RUVBL1/TIP49, RUVBL2, ING3, actin, ACTL6A/BAF53A, MORF4L1/MRG15, MORF4L2/MRGX, MRGBP, YEATS4/GAS41, VPS72/YL1 and MEAF6. The NuA4 complex interacts with MYC and the adenovirus E1A protein. Component of a NuA4-related complex which contains EP400, TRRAP/PAF400, SRCAP, BRD8/SMAP, EPC1, DMAP1/DNMAP1, RUVBL1/TIP49, RUVBL2, actin, ACTL6A/BAF53A, VPS72 and YEATS4/GAS41. Interacts with MLLT10/AF10. Also interacts with the SWI/SNF component SMARCB1/BAF47, TACC1 and TACC2, and the nuclear matrix protein NUMA1.

The protein localises to the nucleus. Functionally, chromatin reader component of the NuA4 histone acetyltransferase (HAT) complex, a complex involved in transcriptional activation of select genes principally by acetylation of nucleosomal histones H4 and H2A. Specifically recognizes and binds acylated histone H3, with a preference for histone H3 diacetylated at 'Lys-18' and 'Lys-27' (H3K18ac and H3K27ac) or histone H3 diacetylated at 'Lys-14' and 'Lys-27' (H3K14ac and H3K27ac). Also able to recognize and bind crotonylated histone H3. May also recognize and bind histone H3 succinylated at 'Lys-122' (H3K122succ); additional evidences are however required to confirm this result in vivo. Plays a key role in histone variant H2AZ1/H2A.Z deposition into specific chromatin regions: recognizes and binds H3K14ac and H3K27ac on the promoters of actively transcribed genes and recruits NuA4-related complex to deposit H2AZ1/H2A.Z. H2AZ1/H2A.Z deposition is required for maintenance of embryonic stem cell. In Mus musculus (Mouse), this protein is YEATS domain-containing protein 4.